The chain runs to 156 residues: Ribosomal RNA large subunit methyltransferase H (156 aa).

S-adenosyl-L-methionine-binding positions include leucine 73, glycine 104, and 123–128 (LSSLTL).

This sequence belongs to the RNA methyltransferase RlmH family. In terms of assembly, homodimer.

Its subcellular location is the cytoplasm. It carries out the reaction pseudouridine(1915) in 23S rRNA + S-adenosyl-L-methionine = N(3)-methylpseudouridine(1915) in 23S rRNA + S-adenosyl-L-homocysteine + H(+). Its function is as follows. Specifically methylates the pseudouridine at position 1915 (m3Psi1915) in 23S rRNA. The chain is Ribosomal RNA large subunit methyltransferase H from Bordetella bronchiseptica (strain ATCC BAA-588 / NCTC 13252 / RB50) (Alcaligenes bronchisepticus).